The following is a 459-amino-acid chain: Argininosuccinate lyase (459 aa).

This sequence belongs to the lyase 1 family. Argininosuccinate lyase subfamily.

It localises to the cytoplasm. The enzyme catalyses 2-(N(omega)-L-arginino)succinate = fumarate + L-arginine. It participates in amino-acid biosynthesis; L-arginine biosynthesis; L-arginine from L-ornithine and carbamoyl phosphate: step 3/3. This Oceanobacillus iheyensis (strain DSM 14371 / CIP 107618 / JCM 11309 / KCTC 3954 / HTE831) protein is Argininosuccinate lyase.